The following is a 116-amino-acid chain: Large ribosomal subunit protein bL19 (116 aa).

This sequence belongs to the bacterial ribosomal protein bL19 family.

Functionally, this protein is located at the 30S-50S ribosomal subunit interface and may play a role in the structure and function of the aminoacyl-tRNA binding site. The protein is Large ribosomal subunit protein bL19 of Azotobacter vinelandii (strain DJ / ATCC BAA-1303).